A 942-amino-acid chain; its full sequence is Protein FAM184B (942 aa).

Disordered regions lie at residues 1–26 and 73–97; these read MASALNSKIHPPGTCASSKADARGGS and QEDLQDTGAETRTRLPQEQSRTSED. Coiled-coil stretches lie at residues 89-150, 196-337, and 387-495; these read QEQS…RVLI, EMHQ…DRLM, and SETQ…SLLE. Residues 486–542 form a disordered region; the sequence is STKLQNSLLEDPCSRPKKPARDEGLEKLTDEEESSSDEEERTGESVKGKSDLQPPFE. Residues 504 to 513 show a composition bias toward basic and acidic residues; the sequence is PARDEGLEKL. Acidic residues predominate over residues 514-526; that stretch reads TDEEESSSDEEER. 2 coiled-coil regions span residues 575–619 and 686–815; these read NKDS…ESLR and EKGL…ERRF. Residues 880–934 are disordered; sequence APPITKSPSLDPSPSCSQPYKPTQLLDGKTASRTQDGEPAQPKEAPQKQGSPHQE. Over residues 885 to 900 the composition is skewed to polar residues; sequence KSPSLDPSPSCSQPYK.

It belongs to the FAM184 family.

The sequence is that of Protein FAM184B (Fam184b) from Mus musculus (Mouse).